The following is an 84-amino-acid chain: U4-theraphotoxin-Hhn1a (84 aa).

The signal sequence occupies residues 1–22 (MKVTLIAILTCAAVLVLHTTAA). A propeptide spanning residues 23 to 47 (EELEESQLMEVGMPDTELAAVDEER) is cleaved from the precursor. 3 cysteine pairs are disulfide-bonded: cysteine 51-cysteine 65, cysteine 55-cysteine 76, and cysteine 70-cysteine 81.

This sequence belongs to the neurotoxin 12 (Hwtx-2) family. 02 (Hwtx-2) subfamily. As to expression, expressed by the venom gland.

Its subcellular location is the secreted. Functionally, postsynaptic neurotoxin. The sequence is that of U4-theraphotoxin-Hhn1a from Cyriopagopus hainanus (Chinese bird spider).